The following is a 308-amino-acid chain: Protein translocase subunit SecF (308 aa).

Helical transmembrane passes span 22–42 (AVSYSFSIILSLISFIWIGIY), 140–160 (IEAGAMAMLSSFLAIMVYIWV), 164–184 (WYFGLGILIALVHDVILALGF), 194–214 (LSTIAAVLTIIGYSVNDSVVI), 246–266 (ILTVITTLLANLALMLFGGEA), and 272–292 (VLVFFGIIAGTYSSIFISAPI).

It belongs to the SecD/SecF family. SecF subfamily. As to quaternary structure, forms a complex with SecD. Part of the essential Sec protein translocation apparatus which comprises SecA, SecYEG and auxiliary proteins SecDF-YajC and YidC.

The protein resides in the cell inner membrane. In terms of biological role, part of the Sec protein translocase complex. Interacts with the SecYEG preprotein conducting channel. SecDF uses the proton motive force (PMF) to complete protein translocation after the ATP-dependent function of SecA. The sequence is that of Protein translocase subunit SecF from Rickettsia akari (strain Hartford).